The following is a 136-amino-acid chain: uncharacterized protein (136 aa).

Residues 7–27 (ANVLAILLVSLFLINGLVFLS) traverse the membrane as a helical segment.

It is found in the membrane. This is an uncharacterized protein from Mycoplasma pneumoniae (strain ATCC 29342 / M129 / Subtype 1) (Mycoplasmoides pneumoniae).